The following is a 545-amino-acid chain: Probable target of rapamycin complex 2 subunit BIT2 (545 aa).

2 disordered regions span residues 1–24 (MATD…PNIK) and 78–166 (DGSN…GTSS). Polar residues-rich tracts occupy residues 11-24 (ATSG…PNIK), 106-130 (IGSS…SNSR), and 151-166 (RSGS…GTSS).

As to quaternary structure, interacts with the target of rapamycin complex 2 (TORC2) subunit TSC11 and the TORC2 effectors SLM1 and SLM2.

In Saccharomyces cerevisiae (strain ATCC 204508 / S288c) (Baker's yeast), this protein is Probable target of rapamycin complex 2 subunit BIT2 (BIT2).